A 384-amino-acid polypeptide reads, in one-letter code: 8-amino-7-oxononanoate synthase (384 aa).

Arg21 serves as a coordination point for substrate. Residue 108 to 109 participates in pyridoxal 5'-phosphate binding; sequence GF. His133 contributes to the substrate binding site. 3 residues coordinate pyridoxal 5'-phosphate: Ser179, His207, and Thr233. N6-(pyridoxal phosphate)lysine is present on Lys236. Substrate is bound at residue Thr352.

The protein belongs to the class-II pyridoxal-phosphate-dependent aminotransferase family. BioF subfamily. In terms of assembly, homodimer. The cofactor is pyridoxal 5'-phosphate.

The enzyme catalyses 6-carboxyhexanoyl-[ACP] + L-alanine + H(+) = (8S)-8-amino-7-oxononanoate + holo-[ACP] + CO2. It functions in the pathway cofactor biosynthesis; biotin biosynthesis. Functionally, catalyzes the decarboxylative condensation of pimeloyl-[acyl-carrier protein] and L-alanine to produce 8-amino-7-oxononanoate (AON), [acyl-carrier protein], and carbon dioxide. This Enterobacter sp. (strain 638) protein is 8-amino-7-oxononanoate synthase.